Here is a 102-residue protein sequence, read N- to C-terminus: ATP-dependent Clp protease adapter protein ClpS (102 aa).

This sequence belongs to the ClpS family. As to quaternary structure, binds to the N-terminal domain of the chaperone ClpA.

In terms of biological role, involved in the modulation of the specificity of the ClpAP-mediated ATP-dependent protein degradation. The protein is ATP-dependent Clp protease adapter protein ClpS of Shewanella oneidensis (strain ATCC 700550 / JCM 31522 / CIP 106686 / LMG 19005 / NCIMB 14063 / MR-1).